The sequence spans 214 residues: RNA pyrophosphohydrolase (214 aa).

Residues 6 to 149 (GFRPNVGIIL…KRDVYQLALT (144 aa)) enclose the Nudix hydrolase domain. Positions 38-59 (GGIKYGETPMQAMYRELHEETG) match the Nudix box motif.

Belongs to the Nudix hydrolase family. RppH subfamily. The cofactor is a divalent metal cation.

Functionally, accelerates the degradation of transcripts by removing pyrophosphate from the 5'-end of triphosphorylated RNA, leading to a more labile monophosphorylated state that can stimulate subsequent ribonuclease cleavage. This Burkholderia cenocepacia (strain ATCC BAA-245 / DSM 16553 / LMG 16656 / NCTC 13227 / J2315 / CF5610) (Burkholderia cepacia (strain J2315)) protein is RNA pyrophosphohydrolase.